Here is a 337-residue protein sequence, read N- to C-terminus: Holliday junction branch migration complex subunit RuvB (337 aa).

The interval 4 to 184 (QDRIISAELK…FGIVQRLEFY (181 aa)) is large ATPase domain (RuvB-L). ATP is bound by residues Ile23, Arg24, Gly65, Lys68, Thr69, Thr70, 131 to 133 (EDY), Arg174, Tyr184, and Arg221. Thr69 contributes to the Mg(2+) binding site. Residues 185–255 (DVESLTTIVA…VAQRALDMLS (71 aa)) form a small ATPAse domain (RuvB-S) region. The head domain (RuvB-H) stretch occupies residues 258-337 (SQGFDHLDRR…FNYQLPSDFK (80 aa)). 2 residues coordinate DNA: Arg313 and Arg318.

Belongs to the RuvB family. Homohexamer. Forms an RuvA(8)-RuvB(12)-Holliday junction (HJ) complex. HJ DNA is sandwiched between 2 RuvA tetramers; dsDNA enters through RuvA and exits via RuvB. An RuvB hexamer assembles on each DNA strand where it exits the tetramer. Each RuvB hexamer is contacted by two RuvA subunits (via domain III) on 2 adjacent RuvB subunits; this complex drives branch migration. In the full resolvosome a probable DNA-RuvA(4)-RuvB(12)-RuvC(2) complex forms which resolves the HJ.

Its subcellular location is the cytoplasm. It carries out the reaction ATP + H2O = ADP + phosphate + H(+). In terms of biological role, the RuvA-RuvB-RuvC complex processes Holliday junction (HJ) DNA during genetic recombination and DNA repair, while the RuvA-RuvB complex plays an important role in the rescue of blocked DNA replication forks via replication fork reversal (RFR). RuvA specifically binds to HJ cruciform DNA, conferring on it an open structure. The RuvB hexamer acts as an ATP-dependent pump, pulling dsDNA into and through the RuvAB complex. RuvB forms 2 homohexamers on either side of HJ DNA bound by 1 or 2 RuvA tetramers; 4 subunits per hexamer contact DNA at a time. Coordinated motions by a converter formed by DNA-disengaged RuvB subunits stimulates ATP hydrolysis and nucleotide exchange. Immobilization of the converter enables RuvB to convert the ATP-contained energy into a lever motion, pulling 2 nucleotides of DNA out of the RuvA tetramer per ATP hydrolyzed, thus driving DNA branch migration. The RuvB motors rotate together with the DNA substrate, which together with the progressing nucleotide cycle form the mechanistic basis for DNA recombination by continuous HJ branch migration. Branch migration allows RuvC to scan DNA until it finds its consensus sequence, where it cleaves and resolves cruciform DNA. The protein is Holliday junction branch migration complex subunit RuvB of Marinomonas sp. (strain MWYL1).